The primary structure comprises 163 residues: uncharacterized protein (163 aa).

This sequence belongs to the mimivirus L242/L243 family.

This is an uncharacterized protein from Acanthamoeba polyphaga (Amoeba).